Consider the following 404-residue polypeptide: Argininosuccinate synthase (404 aa).

Residues Ala-10–Ser-18 and Ala-38 contribute to the ATP site. Residue Tyr-89 participates in L-citrulline binding. Residue Gly-119 participates in ATP binding. Thr-121, Asn-125, and Asp-126 together coordinate L-aspartate. Asn-125 serves as a coordination point for L-citrulline. The L-citrulline site is built by Arg-129, Ser-177, Ser-186, Glu-262, and Tyr-274.

It belongs to the argininosuccinate synthase family. Type 1 subfamily. In terms of assembly, homotetramer.

It is found in the cytoplasm. It carries out the reaction L-citrulline + L-aspartate + ATP = 2-(N(omega)-L-arginino)succinate + AMP + diphosphate + H(+). Its pathway is amino-acid biosynthesis; L-arginine biosynthesis; L-arginine from L-ornithine and carbamoyl phosphate: step 2/3. The polypeptide is Argininosuccinate synthase (Prochlorococcus marinus (strain MIT 9312)).